Consider the following 211-residue polypeptide: Large ribosomal subunit protein uL3 (211 aa).

The span at 130 to 139 shows a compositional bias: polar residues; it reads QDATHGNSLS. Positions 130-151 are disordered; it reads QDATHGNSLSHRAPGSIGQNQT. Q150 carries the N5-methylglutamine modification.

This sequence belongs to the universal ribosomal protein uL3 family. As to quaternary structure, part of the 50S ribosomal subunit. Forms a cluster with proteins L14 and L19. Post-translationally, methylated by PrmB.

Functionally, one of the primary rRNA binding proteins, it binds directly near the 3'-end of the 23S rRNA, where it nucleates assembly of the 50S subunit. In Alcanivorax borkumensis (strain ATCC 700651 / DSM 11573 / NCIMB 13689 / SK2), this protein is Large ribosomal subunit protein uL3.